We begin with the raw amino-acid sequence, 120 residues long: Large ribosomal subunit protein bL19 (120 aa).

Belongs to the bacterial ribosomal protein bL19 family.

This protein is located at the 30S-50S ribosomal subunit interface and may play a role in the structure and function of the aminoacyl-tRNA binding site. The chain is Large ribosomal subunit protein bL19 from Microcystis aeruginosa (strain NIES-843 / IAM M-2473).